The following is a 454-amino-acid chain: Glutamine synthetase (454 aa).

The region spanning 25-111 (QGIDFLRLQF…LICDVVDREG (87 aa)) is the GS beta-grasp domain. The region spanning 118-454 (PRQVLKNVLA…WETDRYLEKF (337 aa)) is the GS catalytic domain. Mg(2+)-binding residues include E141 and E143. E193 serves as a coordination point for ATP. Mg(2+)-binding residues include E198 and E205. L-glutamate is bound by residues 249–250 (NG) and G250. Mg(2+) is bound at residue H254. ATP is bound by residues 256 to 258 (HIS) and S258. R308, E314, and R326 together coordinate L-glutamate. Positions 326 and 331 each coordinate ATP. Position 343 (E343) interacts with Mg(2+). R345 contacts L-glutamate.

The protein belongs to the glutamine synthetase family. As to quaternary structure, oligomer of 12 subunits arranged in the form of two hexagons. In its feedback-inhibited form, interacts with TnrA in order to block its DNA-binding activity. Mg(2+) serves as cofactor.

The protein resides in the cytoplasm. It carries out the reaction L-glutamate + NH4(+) + ATP = L-glutamine + ADP + phosphate + H(+). Inhibited by glutamine. Glutamine synthetase (GS) is an unusual multitasking protein that functions as an enzyme, a transcription coregulator, and a chaperone in ammonium assimilation and in the regulation of genes involved in nitrogen metabolism. It catalyzes the ATP-dependent biosynthesis of glutamine from glutamate and ammonia. Feedback-inhibited GlnA also interacts with and regulates the activity of the transcriptional regulator TnrA. During nitrogen limitation, TnrA is in its DNA-binding active state and turns on the transcription of genes required for nitrogen assimilation. Under conditions of nitrogen excess, feedback-inhibited GlnA forms a stable complex with TnrA, which inhibits its DNA-binding activity. In contrast, feedback-inhibited GlnA acts as a chaperone to stabilize the DNA-binding activity of GlnR, which represses the transcription of nitrogen assimilation genes. The protein is Glutamine synthetase of Halobacterium salinarum (strain ATCC 700922 / JCM 11081 / NRC-1) (Halobacterium halobium).